A 270-amino-acid polypeptide reads, in one-letter code: Urease accessory protein UreD (270 aa).

It belongs to the UreD family. As to quaternary structure, ureD, UreF and UreG form a complex that acts as a GTP-hydrolysis-dependent molecular chaperone, activating the urease apoprotein by helping to assemble the nickel containing metallocenter of UreC. The UreE protein probably delivers the nickel.

It localises to the cytoplasm. In terms of biological role, required for maturation of urease via the functional incorporation of the urease nickel metallocenter. This chain is Urease accessory protein UreD, found in Synechocystis sp. (strain ATCC 27184 / PCC 6803 / Kazusa).